The chain runs to 555 residues: Glucose-6-phosphate isomerase (555 aa).

The active-site Proton donor is the Glu360. Active-site residues include His391 and Lys519.

It belongs to the GPI family.

It is found in the cytoplasm. The catalysed reaction is alpha-D-glucose 6-phosphate = beta-D-fructose 6-phosphate. It participates in carbohydrate biosynthesis; gluconeogenesis. It functions in the pathway carbohydrate degradation; glycolysis; D-glyceraldehyde 3-phosphate and glycerone phosphate from D-glucose: step 2/4. Its function is as follows. Catalyzes the reversible isomerization of glucose-6-phosphate to fructose-6-phosphate. The sequence is that of Glucose-6-phosphate isomerase from Acinetobacter baumannii (strain AB307-0294).